A 778-amino-acid polypeptide reads, in one-letter code: Lon protease (778 aa).

The region spanning Leu8–Leu202 is the Lon N-terminal domain. Gly354–Thr361 lines the ATP pocket. The Lon proteolytic domain occupies Glu591 to Gly772. Active-site residues include Ser678 and Lys721.

It belongs to the peptidase S16 family. In terms of assembly, homohexamer. Organized in a ring with a central cavity.

It is found in the cytoplasm. It carries out the reaction Hydrolysis of proteins in presence of ATP.. In terms of biological role, ATP-dependent serine protease that mediates the selective degradation of mutant and abnormal proteins as well as certain short-lived regulatory proteins. Required for cellular homeostasis and for survival from DNA damage and developmental changes induced by stress. Degrades polypeptides processively to yield small peptide fragments that are 5 to 10 amino acids long. Binds to DNA in a double-stranded, site-specific manner. This chain is Lon protease, found in Clostridium acetobutylicum (strain ATCC 824 / DSM 792 / JCM 1419 / IAM 19013 / LMG 5710 / NBRC 13948 / NRRL B-527 / VKM B-1787 / 2291 / W).